We begin with the raw amino-acid sequence, 366 residues long: Type 2 DNA topoisomerase 6 subunit A (366 aa).

The Topo IIA-type catalytic domain maps to 7-146; that stretch reads SDETEARDQL…FHMRPEESGA (140 aa). Tyr101 functions as the O-(5'-phospho-DNA)-tyrosine intermediate in the catalytic mechanism. The Mg(2+) site is built by Glu199 and Asp251.

Belongs to the TOP6A family. In terms of assembly, homodimer. Heterotetramer of two Top6A and two Top6B chains. Requires Mg(2+) as cofactor.

It catalyses the reaction ATP-dependent breakage, passage and rejoining of double-stranded DNA.. Its function is as follows. Relaxes both positive and negative superturns and exhibits a strong decatenase activity. This chain is Type 2 DNA topoisomerase 6 subunit A, found in Halobacterium salinarum (strain ATCC 700922 / JCM 11081 / NRC-1) (Halobacterium halobium).